A 371-amino-acid chain; its full sequence is Glutamate 5-kinase (371 aa).

Lys14 contributes to the ATP binding site. Substrate contacts are provided by Ser54, Asp141, and Asn153. 173 to 174 (TD) is a binding site for ATP. Residues 280-357 (AGDLILDDGA…TQIEKLLGYI (78 aa)) enclose the PUA domain.

It belongs to the glutamate 5-kinase family.

It localises to the cytoplasm. The catalysed reaction is L-glutamate + ATP = L-glutamyl 5-phosphate + ADP. The protein operates within amino-acid biosynthesis; L-proline biosynthesis; L-glutamate 5-semialdehyde from L-glutamate: step 1/2. Functionally, catalyzes the transfer of a phosphate group to glutamate to form L-glutamate 5-phosphate. In Aromatoleum aromaticum (strain DSM 19018 / LMG 30748 / EbN1) (Azoarcus sp. (strain EbN1)), this protein is Glutamate 5-kinase.